A 599-amino-acid polypeptide reads, in one-letter code: DNA primase (599 aa).

The CHC2-type zinc-finger motif lies at 38 to 62; that stretch reads CPFHDEKTPSFTVSEDKQICHCFGC. The region spanning 260–341 is the Toprim domain; sequence DEIVLLEGFM…NVFVIQLPSG (82 aa). 3 residues coordinate Mg(2+): glutamate 266, aspartate 310, and aspartate 312.

Belongs to the DnaG primase family. Monomer. Interacts with DnaB. The cofactor is Zn(2+). It depends on Mg(2+) as a cofactor.

The enzyme catalyses ssDNA + n NTP = ssDNA/pppN(pN)n-1 hybrid + (n-1) diphosphate.. RNA polymerase that catalyzes the synthesis of short RNA molecules used as primers for DNA polymerase during DNA replication. In Staphylococcus aureus (strain MRSA252), this protein is DNA primase.